The chain runs to 183 residues: ATP synthase subunit delta (183 aa).

The protein belongs to the ATPase delta chain family. As to quaternary structure, F-type ATPases have 2 components, F(1) - the catalytic core - and F(0) - the membrane proton channel. F(1) has five subunits: alpha(3), beta(3), gamma(1), delta(1), epsilon(1). F(0) has three main subunits: a(1), b(2) and c(10-14). The alpha and beta chains form an alternating ring which encloses part of the gamma chain. F(1) is attached to F(0) by a central stalk formed by the gamma and epsilon chains, while a peripheral stalk is formed by the delta and b chains.

It localises to the cell inner membrane. Its function is as follows. F(1)F(0) ATP synthase produces ATP from ADP in the presence of a proton or sodium gradient. F-type ATPases consist of two structural domains, F(1) containing the extramembraneous catalytic core and F(0) containing the membrane proton channel, linked together by a central stalk and a peripheral stalk. During catalysis, ATP synthesis in the catalytic domain of F(1) is coupled via a rotary mechanism of the central stalk subunits to proton translocation. In terms of biological role, this protein is part of the stalk that links CF(0) to CF(1). It either transmits conformational changes from CF(0) to CF(1) or is implicated in proton conduction. The sequence is that of ATP synthase subunit delta from Nitratidesulfovibrio vulgaris (strain DSM 19637 / Miyazaki F) (Desulfovibrio vulgaris).